We begin with the raw amino-acid sequence, 287 residues long: Phosphatidylserine decarboxylase proenzyme (287 aa).

Residues Asp-89, His-146, and Ser-252 each act as charge relay system; for autoendoproteolytic cleavage activity in the active site. The active-site Schiff-base intermediate with substrate; via pyruvic acid; for decarboxylase activity is the Ser-252. Ser-252 bears the Pyruvic acid (Ser); by autocatalysis mark.

The protein belongs to the phosphatidylserine decarboxylase family. PSD-B subfamily. Prokaryotic type I sub-subfamily. Heterodimer of a large membrane-associated beta subunit and a small pyruvoyl-containing alpha subunit. Pyruvate is required as a cofactor. Is synthesized initially as an inactive proenzyme. Formation of the active enzyme involves a self-maturation process in which the active site pyruvoyl group is generated from an internal serine residue via an autocatalytic post-translational modification. Two non-identical subunits are generated from the proenzyme in this reaction, and the pyruvate is formed at the N-terminus of the alpha chain, which is derived from the carboxyl end of the proenzyme. The autoendoproteolytic cleavage occurs by a canonical serine protease mechanism, in which the side chain hydroxyl group of the serine supplies its oxygen atom to form the C-terminus of the beta chain, while the remainder of the serine residue undergoes an oxidative deamination to produce ammonia and the pyruvoyl prosthetic group on the alpha chain. During this reaction, the Ser that is part of the protease active site of the proenzyme becomes the pyruvoyl prosthetic group, which constitutes an essential element of the active site of the mature decarboxylase.

The protein localises to the cell membrane. The enzyme catalyses a 1,2-diacyl-sn-glycero-3-phospho-L-serine + H(+) = a 1,2-diacyl-sn-glycero-3-phosphoethanolamine + CO2. The protein operates within phospholipid metabolism; phosphatidylethanolamine biosynthesis; phosphatidylethanolamine from CDP-diacylglycerol: step 2/2. Its function is as follows. Catalyzes the formation of phosphatidylethanolamine (PtdEtn) from phosphatidylserine (PtdSer). This Shewanella halifaxensis (strain HAW-EB4) protein is Phosphatidylserine decarboxylase proenzyme.